The primary structure comprises 194 residues: Probable WRKY transcription factor 51 (194 aa).

The tract at residues 58-97 (SSETFTGESGGSGSATTLSKKESTNRGSKESDQTKETGHR) is disordered. The span at 76–96 (SKKESTNRGSKESDQTKETGH) shows a compositional bias: basic and acidic residues. Positions 104-169 (SKIDVMDDGF…YEGVHNHESL (66 aa)) form a DNA-binding region, WRKY.

It belongs to the WRKY group II-c family. Interacts with CAMBP25/VQ15.

It is found in the nucleus. In terms of biological role, transcription factor. Interacts specifically with the W box (5'-(T)TGAC[CT]-3'), a frequently occurring elicitor-responsive cis-acting element. Involved in defense responses. May act as positive regulator of salicylic acid (SA)-mediated signaling and negative regulator of jasmonic acid (JA)-mediated signaling. This is Probable WRKY transcription factor 51 (WRKY51) from Arabidopsis thaliana (Mouse-ear cress).